We begin with the raw amino-acid sequence, 567 residues long: DNA ligase B (567 aa).

Catalysis depends on lysine 132, which acts as the N6-AMP-lysine intermediate.

The protein belongs to the NAD-dependent DNA ligase family. LigB subfamily.

It carries out the reaction NAD(+) + (deoxyribonucleotide)n-3'-hydroxyl + 5'-phospho-(deoxyribonucleotide)m = (deoxyribonucleotide)n+m + AMP + beta-nicotinamide D-nucleotide.. Catalyzes the formation of phosphodiester linkages between 5'-phosphoryl and 3'-hydroxyl groups in double-stranded DNA using NAD as a coenzyme and as the energy source for the reaction. The chain is DNA ligase B from Yersinia pestis.